Here is a 529-residue protein sequence, read N- to C-terminus: Peptide chain release factor 3 (529 aa).

A tr-type G domain is found at 11-280; the sequence is NKRRTFAIIS…GLVKWAPAPM (270 aa). GTP contacts are provided by residues 20 to 27, 88 to 92, and 142 to 145; these read SHPDAGKT, DTPGH, and NKLD.

It belongs to the TRAFAC class translation factor GTPase superfamily. Classic translation factor GTPase family. PrfC subfamily.

The protein resides in the cytoplasm. Its function is as follows. Increases the formation of ribosomal termination complexes and stimulates activities of RF-1 and RF-2. It binds guanine nucleotides and has strong preference for UGA stop codons. It may interact directly with the ribosome. The stimulation of RF-1 and RF-2 is significantly reduced by GTP and GDP, but not by GMP. This chain is Peptide chain release factor 3, found in Proteus mirabilis (strain HI4320).